The primary structure comprises 113 residues: DNA-directed RNA polymerase subunit Rpo4 (113 aa).

Belongs to the eukaryotic RPB4 RNA polymerase subunit family. Part of the 13-subunit RNA polymerase complex. Forms a stalk with Rpo7 that extends from the main structure.

Its subcellular location is the cytoplasm. It carries out the reaction RNA(n) + a ribonucleoside 5'-triphosphate = RNA(n+1) + diphosphate. Functionally, DNA-dependent RNA polymerase (RNAP) catalyzes the transcription of DNA into RNA using the four ribonucleoside triphosphates as substrates. This subunit is less well bound than the others. This is DNA-directed RNA polymerase subunit Rpo4 from Saccharolobus solfataricus (strain ATCC 35092 / DSM 1617 / JCM 11322 / P2) (Sulfolobus solfataricus).